The following is a 55-amino-acid chain: Hydrophobic protein LTI6B (55 aa).

2 helical membrane-spanning segments follow: residues 8–28 (IDIL…FGCG) and 31–51 (FWIC…YAIY).

It belongs to the UPF0057 (PMP3) family.

It is found in the membrane. In terms of biological role, plays a role in the regulation of membrane potential. Could mediate a proton leak. This chain is Hydrophobic protein LTI6B (LTI6B), found in Oryza sativa subsp. indica (Rice).